The chain runs to 24 residues: Large ribosomal subunit protein uL30 (24 aa).

Belongs to the universal ribosomal protein uL30 family. In terms of assembly, part of the 50S ribosomal subunit.

This Ectopseudomonas mendocina (Pseudomonas mendocina) protein is Large ribosomal subunit protein uL30 (rpmD).